Consider the following 83-residue polypeptide: Small ribosomal subunit protein bS21 (83 aa).

Residues 40–83 (TPMDERRRKARSASKRNKVKWRYSNKSEETASETAETPASAPEA) are disordered. Positions 47-62 (RKARSASKRNKVKWRY) are enriched in basic residues. A compositionally biased stretch (low complexity) spans 71–83 (SETAETPASAPEA).

This sequence belongs to the bacterial ribosomal protein bS21 family.

This Akkermansia muciniphila (strain ATCC BAA-835 / DSM 22959 / JCM 33894 / BCRC 81048 / CCUG 64013 / CIP 107961 / Muc) protein is Small ribosomal subunit protein bS21.